The chain runs to 82 residues: ATP synthase subunit c (82 aa).

Transmembrane regions (helical) follow at residues 18 to 38 (LGEALGAGLAVIGAGLGIGKI) and 61 to 81 (IIAAALVEGVSLFAVVVCGFL).

It belongs to the ATPase C chain family. In terms of assembly, F-type ATPases have 2 components, F(1) - the catalytic core - and F(0) - the membrane proton channel. F(1) has five subunits: alpha(3), beta(3), gamma(1), delta(1), epsilon(1). F(0) has three main subunits: a(1), b(2) and c(10-14). The alpha and beta chains form an alternating ring which encloses part of the gamma chain. F(1) is attached to F(0) by a central stalk formed by the gamma and epsilon chains, while a peripheral stalk is formed by the delta and b chains.

The protein localises to the cell inner membrane. Its function is as follows. F(1)F(0) ATP synthase produces ATP from ADP in the presence of a proton or sodium gradient. F-type ATPases consist of two structural domains, F(1) containing the extramembraneous catalytic core and F(0) containing the membrane proton channel, linked together by a central stalk and a peripheral stalk. During catalysis, ATP synthesis in the catalytic domain of F(1) is coupled via a rotary mechanism of the central stalk subunits to proton translocation. Functionally, key component of the F(0) channel; it plays a direct role in translocation across the membrane. A homomeric c-ring of between 10-14 subunits forms the central stalk rotor element with the F(1) delta and epsilon subunits. This chain is ATP synthase subunit c, found in Azobacteroides pseudotrichonymphae genomovar. CFP2.